Reading from the N-terminus, the 84-residue chain is Cell division topological specificity factor (84 aa).

It belongs to the MinE family.

In terms of biological role, prevents the cell division inhibition by proteins MinC and MinD at internal division sites while permitting inhibition at polar sites. This ensures cell division at the proper site by restricting the formation of a division septum at the midpoint of the long axis of the cell. The sequence is that of Cell division topological specificity factor from Paraburkholderia xenovorans (strain LB400).